Here is a 201-residue protein sequence, read N- to C-terminus: dCTP deaminase, dUMP-forming (201 aa).

Residues 117 to 122, aspartate 135, 143 to 145, glutamine 163, tyrosine 177, and glutamine 188 each bind dCTP; these read RSSFGR and TLE. Glutamate 145 functions as the Proton donor/acceptor in the catalytic mechanism.

It belongs to the dCTP deaminase family. Homotrimer.

It carries out the reaction dCTP + 2 H2O = dUMP + NH4(+) + diphosphate. It participates in pyrimidine metabolism; dUMP biosynthesis; dUMP from dCTP: step 1/1. Bifunctional enzyme that catalyzes both the deamination of dCTP to dUTP and the hydrolysis of dUTP to dUMP without releasing the toxic dUTP intermediate. The protein is dCTP deaminase, dUMP-forming of Methanococcus aeolicus (strain ATCC BAA-1280 / DSM 17508 / OCM 812 / Nankai-3).